The sequence spans 57 residues: UPF0391 membrane protein BRADO2787 (57 aa).

2 helical membrane passes run 6-26 (WALL…TGVS) and 35-55 (ILFY…LTIF).

The protein belongs to the UPF0391 family.

Its subcellular location is the cell membrane. The protein is UPF0391 membrane protein BRADO2787 of Bradyrhizobium sp. (strain ORS 278).